An 801-amino-acid polypeptide reads, in one-letter code: Glycerol-3-phosphate acyltransferase 2, mitochondrial (801 aa).

The tract at residues 1–24 is disordered; sequence MDTMLKSNPQTQQRSNHNGQETSL. At 1–305 the chain is on the cytoplasmic side; sequence MDTMLKSNPQ…PGPRLSALGQ (305 aa). Residues 180-290 are acyltransferase; that stretch reads QLHKGQMKMV…SGQPLLIFLE (111 aa). The short motif at 205 to 210 is the HXXXXD motif element; that stretch reads HKSLLD. The helical transmembrane segment at 306-332 threads the bilayer; it reads AWLGVVIQAVQAGIISDATLVPVAIAY. The Mitochondrial intermembrane portion of the chain corresponds to 333-449; that stretch reads DLVPDAPCNM…QLLVRRLSRH (117 aa). The chain crosses the membrane as a helical span at residues 450 to 472; sequence VLSASVASSAVMSTAIMATLLLL. The Cytoplasmic portion of the chain corresponds to 473-801; it reads KHQKGVVLSQ…EQFIRQFICS (329 aa). Residue Ser-662 is modified to Phosphoserine. Thr-666 carries the phosphothreonine modification. Phosphoserine occurs at positions 668 and 670.

The protein belongs to the GPAT/DAPAT family. As to quaternary structure, interacts with PIWIL2. Highly expressed in the testis. Expressed at lower levels in the heart, liver, kidney, spleen and adipose cells. Only detected in primary spermatocytes.

The protein resides in the mitochondrion outer membrane. It catalyses the reaction sn-glycerol 3-phosphate + an acyl-CoA = a 1-acyl-sn-glycero-3-phosphate + CoA. It carries out the reaction a 1-acyl-sn-glycero-3-phosphate + an acyl-CoA = a 1,2-diacyl-sn-glycero-3-phosphate + CoA. The catalysed reaction is 1-(9Z-octadecenoyl)-sn-glycero-3-phosphate + (9Z)-octadecenoyl-CoA = 1,2-di-(9Z-octadecenoyl)-sn-glycero-3-phosphate + CoA. The enzyme catalyses 1-(9Z-octadecenoyl)-sn-glycero-3-phosphate + (5Z,8Z,11Z,14Z)-eicosatetraenoyl-CoA = 1-(9Z)-octadecenoyl-2-(5Z,8Z,11Z,14Z)-eicosatetraenoyl-sn-glycero-3-phosphate + CoA. It catalyses the reaction (5Z,8Z,11Z,14Z)-eicosatetraenoyl-CoA + sn-glycerol 3-phosphate = 1-(5Z,8Z,11Z,14Z-eicosatetraenoyl)-sn-glycero-3-phosphate + CoA. It functions in the pathway phospholipid metabolism; CDP-diacylglycerol biosynthesis; CDP-diacylglycerol from sn-glycerol 3-phosphate: step 1/3. Inhibited by N-ethylmaleimide (NEM). Functionally, transfers an acyl-group from acyl-ACP to the sn-1 position of glycerol-3-phosphate producing a lysophosphatidic acid (LPA), an essential step for the triacylglycerol (TAG) and glycerophospholipids. In vitro also transfers an acyl-group from acyl-ACP to the LPA producing a phosphatidic acid (PA). Prefers arachidonoyl-CoA as the acyl donor. Required for primary processing step during piRNA biosynthesis. Molecular mechanisms by which it promotes piRNA biosynthesis are unclear and do not involve its acyltransferase activity. The polypeptide is Glycerol-3-phosphate acyltransferase 2, mitochondrial (Mus musculus (Mouse)).